Reading from the N-terminus, the 445-residue chain is 2-oxoisovalerate dehydrogenase subunit alpha, mitochondrial (445 aa).

A mitochondrion-targeting transit peptide spans 1–45 (MAVAIAAARVWRPNRGLSQAALLLLWRPGARGLARSHPHRQQQQF). Thiamine diphosphate-binding residues include tyrosine 158 and arginine 159. Position 206 (serine 206) interacts with K(+). Serine 207 lines the thiamine diphosphate pocket. Residues proline 208, threonine 211, and glutamine 212 each coordinate K(+). Mg(2+) is bound at residue glutamate 238. The thiamine diphosphate site is built by glycine 239, alanine 240, and arginine 265. Mg(2+)-binding residues include asparagine 267 and tyrosine 269. Histidine 336 serves as a coordination point for thiamine diphosphate. A Phosphoserine; by BCKDK modification is found at serine 337. Threonine 338 carries the phosphothreonine modification. 2 positions are modified to phosphoserine: serine 339 and serine 347. Lysine 356 carries the post-translational modification N6-acetyllysine; alternate. N6-succinyllysine; alternate is present on lysine 356. The residue at position 380 (lysine 380) is an N6-succinyllysine.

It belongs to the BCKDHA family. In terms of assembly, heterotetramer of 2 alpha/BCKDHA and 2 beta chains/BCKDHB that forms the branched-chain alpha-keto acid decarboxylase (E1) component of the BCKD complex. The branched-chain alpha-ketoacid dehydrogenase is a large complex composed of three major building blocks E1, E2 and E3. It is organized around E2, a 24-meric cubic core composed of DBT, to which are associated 6 to 12 copies of E1, and approximately 6 copies of the dehydrogenase E3, a DLD dimer. Interacts with PPM1K. Thiamine diphosphate serves as cofactor. Requires Mg(2+) as cofactor. Phosphorylated at Ser-337 by BCKDK and dephosphorylated by protein phosphatase PPM1K.

The protein localises to the mitochondrion matrix. The catalysed reaction is N(6)-[(R)-lipoyl]-L-lysyl-[protein] + 3-methyl-2-oxobutanoate + H(+) = N(6)-[(R)-S(8)-2-methylpropanoyldihydrolipoyl]-L-lysyl-[protein] + CO2. Together with BCKDHB forms the heterotetrameric E1 subunit of the mitochondrial branched-chain alpha-ketoacid dehydrogenase (BCKD) complex. The BCKD complex catalyzes the multi-step oxidative decarboxylation of alpha-ketoacids derived from the branched-chain amino-acids valine, leucine and isoleucine producing CO2 and acyl-CoA which is subsequently utilized to produce energy. The E1 subunit catalyzes the first step with the decarboxylation of the alpha-ketoacid forming an enzyme-product intermediate. A reductive acylation mediated by the lipoylamide cofactor of E2 extracts the acyl group from the E1 active site for the next step of the reaction. The sequence is that of 2-oxoisovalerate dehydrogenase subunit alpha, mitochondrial (BCKDHA) from Macaca fascicularis (Crab-eating macaque).